Consider the following 514-residue polypeptide: Peptide chain release factor 3 (514 aa).

A tr-type G domain is found at Lys8–His268. GTP contacts are provided by residues Ser17–Thr24, Asp85–His89, and Asn139–Asp142.

The protein belongs to the TRAFAC class translation factor GTPase superfamily. Classic translation factor GTPase family. PrfC subfamily.

It is found in the cytoplasm. Increases the formation of ribosomal termination complexes and stimulates activities of RF-1 and RF-2. It binds guanine nucleotides and has strong preference for UGA stop codons. It may interact directly with the ribosome. The stimulation of RF-1 and RF-2 is significantly reduced by GTP and GDP, but not by GMP. The chain is Peptide chain release factor 3 from Streptococcus pneumoniae serotype 19F (strain G54).